We begin with the raw amino-acid sequence, 227 residues long: Thiamine-phosphate synthase (227 aa).

4-amino-2-methyl-5-(diphosphooxymethyl)pyrimidine-binding positions include 46 to 50 (QLRDK) and Asn87. The Mg(2+) site is built by Asp88 and Asp107. Ser126 serves as a coordination point for 4-amino-2-methyl-5-(diphosphooxymethyl)pyrimidine. 152–154 (TPT) is a binding site for 2-[(2R,5Z)-2-carboxy-4-methylthiazol-5(2H)-ylidene]ethyl phosphate. Lys155 lines the 4-amino-2-methyl-5-(diphosphooxymethyl)pyrimidine pocket. Gly183 contacts 2-[(2R,5Z)-2-carboxy-4-methylthiazol-5(2H)-ylidene]ethyl phosphate.

Belongs to the thiamine-phosphate synthase family. The cofactor is Mg(2+).

The enzyme catalyses 2-[(2R,5Z)-2-carboxy-4-methylthiazol-5(2H)-ylidene]ethyl phosphate + 4-amino-2-methyl-5-(diphosphooxymethyl)pyrimidine + 2 H(+) = thiamine phosphate + CO2 + diphosphate. The catalysed reaction is 2-(2-carboxy-4-methylthiazol-5-yl)ethyl phosphate + 4-amino-2-methyl-5-(diphosphooxymethyl)pyrimidine + 2 H(+) = thiamine phosphate + CO2 + diphosphate. It catalyses the reaction 4-methyl-5-(2-phosphooxyethyl)-thiazole + 4-amino-2-methyl-5-(diphosphooxymethyl)pyrimidine + H(+) = thiamine phosphate + diphosphate. It participates in cofactor biosynthesis; thiamine diphosphate biosynthesis; thiamine phosphate from 4-amino-2-methyl-5-diphosphomethylpyrimidine and 4-methyl-5-(2-phosphoethyl)-thiazole: step 1/1. Its function is as follows. Condenses 4-methyl-5-(beta-hydroxyethyl)thiazole monophosphate (THZ-P) and 2-methyl-4-amino-5-hydroxymethyl pyrimidine pyrophosphate (HMP-PP) to form thiamine monophosphate (TMP). This chain is Thiamine-phosphate synthase, found in Mycolicibacterium smegmatis (strain ATCC 700084 / mc(2)155) (Mycobacterium smegmatis).